We begin with the raw amino-acid sequence, 433 residues long: uncharacterized protein (433 aa).

Residues 1–28 form the signal peptide; it reads MKICGLEKFRVFLSLISMVSLLCNGVNG. Residues 29–274 are Extracellular-facing; it reads FTIVRSMAVN…QAELEPKKTG (246 aa). Over residues 235–250 the composition is skewed to polar residues; the sequence is GENANPTANSGTSARS. The interval 235 to 266 is disordered; that stretch reads GENANPTANSGTSARSNRNEQNKMEEPARNQA. Residues 251–266 show a composition bias toward basic and acidic residues; that stretch reads NRNEQNKMEEPARNQA. Residues 275–295 form a helical membrane-spanning segment; that stretch reads VVVAGVTVSLAAGFVLALATL. Residues 296–433 are Cytoplasmic-facing; sequence LLMKKKQTSL…HDKGTDEDKG (138 aa). Disordered stretches follow at residues 320–340 and 413–433; these read EEPV…PSFD and KVIE…EDKG.

Component of the acid-insoluble and acid-soluble organic matrix of the aragonitic skeleton (at protein level).

It is found in the membrane. This is an uncharacterized protein from Acropora millepora (Staghorn coral).